A 391-amino-acid chain; its full sequence is Methylthioribose-1-phosphate isomerase (391 aa).

Asp267 acts as the Proton donor in catalysis.

Belongs to the eIF-2B alpha/beta/delta subunits family. MtnA subfamily.

It localises to the cytoplasm. The protein localises to the nucleus. The catalysed reaction is 5-(methylsulfanyl)-alpha-D-ribose 1-phosphate = 5-(methylsulfanyl)-D-ribulose 1-phosphate. The protein operates within amino-acid biosynthesis; L-methionine biosynthesis via salvage pathway; L-methionine from S-methyl-5-thio-alpha-D-ribose 1-phosphate: step 1/6. Functionally, catalyzes the interconversion of methylthioribose-1-phosphate (MTR-1-P) into methylthioribulose-1-phosphate (MTRu-1-P). The protein is Methylthioribose-1-phosphate isomerase of Ajellomyces capsulatus (strain NAm1 / WU24) (Darling's disease fungus).